Reading from the N-terminus, the 131-residue chain is Profilin-2 (131 aa).

The protein belongs to the profilin family. As to quaternary structure, occurs in many kinds of cells as a complex with monomeric actin in a 1:1 ratio.

The protein localises to the cytoplasm. The protein resides in the cytoskeleton. Functionally, binds to actin and affects the structure of the cytoskeleton. At high concentrations, profilin prevents the polymerization of actin, whereas it enhances it at low concentrations. By binding to PIP2, it inhibits the formation of IP3 and DG. This chain is Profilin-2, found in Malus domestica (Apple).